The primary structure comprises 415 residues: Trehalose synthase (415 aa).

This sequence belongs to the glycosyltransferase group 1 family. Glycosyltransferase 4 subfamily. In terms of assembly, homodimer. Mg(2+) is required as a cofactor.

The enzyme catalyses an NDP-alpha-D-glucose + D-glucose = alpha,alpha-trehalose + a ribonucleoside 5'-diphosphate + H(+). In terms of biological role, synthesizes trehalose from ADP-, UDP- or GDP-glucose and glucose. This Pyrococcus horikoshii (strain ATCC 700860 / DSM 12428 / JCM 9974 / NBRC 100139 / OT-3) protein is Trehalose synthase.